A 344-amino-acid chain; its full sequence is N,N-dimethyltransferase OxyT (344 aa).

S-adenosyl-L-methionine is bound by residues aspartate 205 and 231-233 (GDF).

This sequence belongs to the class I-like SAM-binding methyltransferase superfamily. Cation-independent O-methyltransferase family.

The catalysed reaction is 4-amino-4-dedimethylamino-anhydrotetracycline + S-adenosyl-L-methionine = 4-methylamino-4-dedimethylamino-anhydrotetracycline + S-adenosyl-L-homocysteine + H(+). The enzyme catalyses 4-methylamino-4-dedimethylamino-anhydrotetracycline + S-adenosyl-L-methionine = anhydrotetracycline + S-adenosyl-L-homocysteine + H(+). It functions in the pathway antibiotic biosynthesis; oxytetracycline biosynthesis. In terms of biological role, involved in the biosynthesis of the tetracycline antibiotic, oxytetracycline. Catalyzes the dimethylation of 4-amino-4-de(dimethylamino)anhydrotetracycline (4-amino-ATC) to yield anhydrotetracycline (ATC). Also able to catalyze the dimethylation of 7-chloro-, 6-demethyl-, 2-decarboxamido-2-nitrile-, and 4-methylamino-derivatives of 4-amino-4-de(dimethylamino)anhydrotetracycline. In Streptomyces rimosus, this protein is N,N-dimethyltransferase OxyT.